Here is a 398-residue protein sequence, read N- to C-terminus: Elongation factor Tu (398 aa).

Residues 10 to 208 form the tr-type G domain; the sequence is KPHVNVGTIG…ALDSHIPEPT (199 aa). A G1 region spans residues 19-26; that stretch reads GHIDHGKT. GTP is bound at residue 19–26; it reads GHIDHGKT. T26 provides a ligand contact to Mg(2+). A G2 region spans residues 60 to 64; sequence TKTVT. Residues 83-86 are G3; the sequence is DCPG. GTP contacts are provided by residues 83-87 and 138-141; these read DCPGH and NKCD. Positions 138 to 141 are G4; sequence NKCD. The G5 stretch occupies residues 176–178; sequence SSL.

The protein belongs to the TRAFAC class translation factor GTPase superfamily. Classic translation factor GTPase family. EF-Tu/EF-1A subfamily. As to quaternary structure, monomer.

It is found in the cytoplasm. It carries out the reaction GTP + H2O = GDP + phosphate + H(+). GTP hydrolase that promotes the GTP-dependent binding of aminoacyl-tRNA to the A-site of ribosomes during protein biosynthesis. The chain is Elongation factor Tu from Rhodopirellula baltica (strain DSM 10527 / NCIMB 13988 / SH1).